The following is a 122-amino-acid chain: Large ribosomal subunit protein uL14c (122 aa).

This sequence belongs to the universal ribosomal protein uL14 family. In terms of assembly, part of the 50S ribosomal subunit.

Its subcellular location is the plastid. Its function is as follows. Binds to 23S rRNA. The chain is Large ribosomal subunit protein uL14c from Euglena longa (Euglenophycean alga).